Here is a 79-residue protein sequence, read N- to C-terminus: Sulfur carrier protein TusA (79 aa).

The active-site Cysteine persulfide intermediate is the C17.

The protein belongs to the sulfur carrier protein TusA family.

Its subcellular location is the cytoplasm. Functionally, sulfur carrier protein which probably makes part of a sulfur-relay system. The chain is Sulfur carrier protein TusA from Haemophilus ducreyi (strain 35000HP / ATCC 700724).